The following is a 312-amino-acid chain: Olfactory receptor 6C74 (312 aa).

Over 1–23 (MRNHTTVANFILLGLTDDPQLQV) the chain is Extracellular. Asn3 is a glycosylation site (N-linked (GlcNAc...) asparagine). The chain crosses the membrane as a helical span at residues 24–44 (IIFLLLFFTYMLSITGNLTII). Over 45-63 (TLTLLDLHLKTPMYFFLRN) the chain is Cytoplasmic. The chain crosses the membrane as a helical span at residues 64-84 (FSFLEVSFTTVYIPKFLVSMA). Topologically, residues 85 to 95 (TGDKTISYNDC) are extracellular. Cys95 and Cys177 form a disulfide bridge. The helical transmembrane segment at 96 to 116 (AAQLFFTILLGATEFFLLAAM) threads the bilayer. The Cytoplasmic portion of the chain corresponds to 117 to 140 (SYERYVAICKPLHYTTIMSSRVCS). Residues 141-161 (LLVFASWMAGFLIIFPPLLMG) traverse the membrane as a helical segment. Residues 162–194 (LQLDFCAANTVDHFFCDVSPILQLSCTDTDIIE) lie on the Extracellular side of the membrane. The chain crosses the membrane as a helical span at residues 195 to 215 (LMMLLSAILTLLVTLVLVILS). Residues 216–237 (YTNIIRTILKIPSSQQRKKAFS) are Cytoplasmic-facing. The chain crosses the membrane as a helical span at residues 238-258 (TCSSHMVVVSISYGSCIFMYV). The Extracellular segment spans residues 259–269 (KPSAKERVSLN). The chain crosses the membrane as a helical span at residues 270–290 (KGIALLSTSVAPMLNPFIYTL). Residues 291–312 (RNKQVKDVFKHTVKKIELFSMK) lie on the Cytoplasmic side of the membrane.

Belongs to the G-protein coupled receptor 1 family.

It is found in the cell membrane. Odorant receptor. This chain is Olfactory receptor 6C74 (OR6C74), found in Homo sapiens (Human).